The chain runs to 898 residues: Netrin receptor UNC5A (898 aa).

The N-terminal stretch at 1 to 25 is a signal peptide; that stretch reads MAVRPGLWPVLLGIVLAAWLRGSGA. Over 26 to 361 the chain is Extracellular; it reads QQSATVANPV…TASCPEDVAL (336 aa). Residues 44–141 form the Ig-like domain; the sequence is PHFLVEPEDV…SGTTKSQKAY (98 aa). 3 cysteine pairs are disulfide-bonded: cysteine 65–cysteine 126, cysteine 77–cysteine 124, and cysteine 170–cysteine 221. N-linked (GlcNAc...) asparagine glycans are attached at residues asparagine 107 and asparagine 218. The region spanning 155-238 is the Ig-like C2-type domain; it reads PLAKEVSLEQ…RRRSTSAAVI (84 aa). 2 TSP type-1 domains span residues 242–296 and 298–350; these read NGGW…TLCP and DGSW…DLCL. Residues tryptophan 245, tryptophan 248, and tryptophan 251 are each glycosylated (C-linked (Man) tryptophan). 3 cysteine pairs are disulfide-bonded: cysteine 254–cysteine 291, cysteine 258–cysteine 295, and cysteine 269–cysteine 281. Tryptophan 301 and tryptophan 304 each carry a C-linked (Man) tryptophan glycan. Intrachain disulfides connect cysteine 310–cysteine 344, cysteine 314–cysteine 349, and cysteine 322–cysteine 334. N-linked (GlcNAc...) asparagine glycosylation occurs at asparagine 343. A helical membrane pass occupies residues 362–382; it reads YIGLVAVAVCLFLLLLALGLI. Over 383 to 898 the chain is Cytoplasmic; that stretch reads YCRKKEGLDS…GLFTVSEAEC (516 aa). In terms of domain architecture, ZU5 spans 497 to 640; that stretch reads NMAYGTFNFL…LGRFALVGEA (144 aa). The interval 661–679 is interaction with DCC; the sequence is SLEYNIRVYCLHDTHDALK. In terms of domain architecture, Death spans 817 to 897; sequence QKIIASLDPP…AGLFTVSEAE (81 aa).

It belongs to the unc-5 family. As to quaternary structure, homodimer and homooligomer. Interacts with the cytoplasmic part of DCC. Interacts with MAGED1. Interacts with PRKCABP, possibly mediating some interaction with PKC. Interacts (via extracellular domain) with FLRT2 (via extracellular domain). Interacts (via extracellular domain) with FLRT3 (via extracellular domain). Phosphorylated on cytoplasmic tyrosine residues. Phosphorylated by PKC in vitro. Post-translationally, proteolytically cleaved by caspases during apoptosis. The cleavage does not take place when the receptor is associated with netrin ligand. Its cleavage by caspases is required to induce apoptosis. In terms of processing, the two extracellular TSRs of UNC5A contain WxxWxxWxxC motifs that can be C-mannosylated on all tryptophans. DPY19L1 preferentially mannosylates the first two tryptophans and DPY19L3 prefers the third. C-mannosylation by DPY19L1 is required for transport of UNC5A from the endoplasmic reticulum to the cell surface. Mainly expressed in regions of differentiating neurons. Expressed at early stages of neural tube development in the ventral spinal cord. In developing hindbrain, it colocalizes with a number of cranial motor neuron subpopulations from embryonic E11 to E14, while DCC is expressed by motor neurons at E12. Also expressed in non-neural structures, such as the basal plane of the hindbrain and midbrain, in the developing hypothalamus, thalamus and in the pallidum.

It is found in the cell membrane. It localises to the membrane raft. Its subcellular location is the cell projection. The protein localises to the neuron projection. Receptor for netrin required for axon guidance. Functions in the netrin signaling pathway and promotes neurite outgrowth in response to NTN1. Mediates axon repulsion of neuronal growth cones in the developing nervous system in response to netrin. Axon repulsion in growth cones may be mediated by its association with DCC that may trigger signaling for repulsion. It also acts as a dependence receptor required for apoptosis induction when not associated with netrin ligand. The protein is Netrin receptor UNC5A (Unc5a) of Rattus norvegicus (Rat).